A 138-amino-acid polypeptide reads, in one-letter code: ATP synthase epsilon chain, chloroplastic (138 aa).

It belongs to the ATPase epsilon chain family. As to quaternary structure, F-type ATPases have 2 components, CF(1) - the catalytic core - and CF(0) - the membrane proton channel. CF(1) has five subunits: alpha(3), beta(3), gamma(1), delta(1), epsilon(1). CF(0) has three main subunits: a, b and c.

Its subcellular location is the plastid. The protein localises to the chloroplast thylakoid membrane. Functionally, produces ATP from ADP in the presence of a proton gradient across the membrane. This is ATP synthase epsilon chain, chloroplastic from Staurastrum punctulatum (Green alga).